Reading from the N-terminus, the 177-residue chain is Large ribosomal subunit protein uL6 (177 aa).

This sequence belongs to the universal ribosomal protein uL6 family. Part of the 50S ribosomal subunit.

This protein binds to the 23S rRNA, and is important in its secondary structure. It is located near the subunit interface in the base of the L7/L12 stalk, and near the tRNA binding site of the peptidyltransferase center. The chain is Large ribosomal subunit protein uL6 from Buchnera aphidicola subsp. Acyrthosiphon kondoi (Acyrthosiphon kondoi symbiotic bacterium).